We begin with the raw amino-acid sequence, 250 residues long: MAEAASCARKGTKYAEGTQPFTVLIEGNIGSGKTTYLNHFEKYKNDICLLTEPVEKWRNVNGVNLLELMYKDPKKWAMPFQSYVTLTMLQSHTAPTNKKLKIMERSIFSARYCFVENMRRNGSLEQGMYNTLEEWYKFIEESIHVQADLIIYLRTSPEVAYERIRQRARSEESCVPLKYLQELHELHEDWLIHQRRPQSCKVLVLDADLNLENIGTEYQRSESSIFDAISSNQQPSPVLVSPSKRQRVAR.

Position 27-35 (Gly27–Thr35) interacts with ATP. Positions 52, 70, and 81 each coordinate substrate. Glu104 (proton acceptor) is an active-site residue. The substrate site is built by Arg105 and Glu172. Residues Ser236, Ser241, and Ser243 each carry the phosphoserine modification.

This sequence belongs to the DCK/DGK family. In terms of assembly, monomer.

The enzyme catalyses a 2'-deoxyribonucleoside + ATP = a 2'-deoxyribonucleoside 5'-phosphate + ADP + H(+). Subject to feedback inhibition by dTTP. Its function is as follows. Deoxyribonucleoside kinase that has a broad specificity phosphorylating thymidine, 2'-deoxyriboadenosine, 2'-deoxyribocytidine and 2'-deoxyriboguanosine. Specificity is higher for pyrimidine nucleosides. Several anti-viral and anti-cancer nucleoside analogs are also efficiently phosphorylated. The protein is Deoxynucleoside kinase (dnk) of Drosophila melanogaster (Fruit fly).